The sequence spans 1413 residues: DNA-directed RNA polymerase subunit beta' (1413 aa).

The Zn(2+) site is built by C70, C72, C85, and C88. Positions 460, 462, and 464 each coordinate Mg(2+). Zn(2+) contacts are provided by C814, C888, C895, and C898.

The protein belongs to the RNA polymerase beta' chain family. In terms of assembly, the RNAP catalytic core consists of 2 alpha, 1 beta, 1 beta' and 1 omega subunit. When a sigma factor is associated with the core the holoenzyme is formed, which can initiate transcription. The cofactor is Mg(2+). Zn(2+) serves as cofactor.

It carries out the reaction RNA(n) + a ribonucleoside 5'-triphosphate = RNA(n+1) + diphosphate. DNA-dependent RNA polymerase catalyzes the transcription of DNA into RNA using the four ribonucleoside triphosphates as substrates. This chain is DNA-directed RNA polymerase subunit beta', found in Buchnera aphidicola subsp. Schizaphis graminum (strain Sg).